Here is a 201-residue protein sequence, read N- to C-terminus: Small ribosomal subunit protein uS2 (201 aa).

This sequence belongs to the universal ribosomal protein uS2 family. Part of the 50S ribosomal subunit.

The polypeptide is Small ribosomal subunit protein uS2 (Thermococcus kodakarensis (strain ATCC BAA-918 / JCM 12380 / KOD1) (Pyrococcus kodakaraensis (strain KOD1))).